Reading from the N-terminus, the 148-residue chain is Arginine repressor (148 aa).

It belongs to the ArgR family.

The protein localises to the cytoplasm. It participates in amino-acid biosynthesis; L-arginine biosynthesis [regulation]. Regulates arginine biosynthesis genes. In Chlorobium limicola (strain DSM 245 / NBRC 103803 / 6330), this protein is Arginine repressor.